Consider the following 449-residue polypeptide: Glutamate--tRNA ligase (449 aa).

Positions 10–20 match the 'HIGH' region motif; the sequence is PSPTGHLHIGN. The 'KMSKS' region signature appears at 214–218; that stretch reads KLSKR. ATP is bound at residue K217.

This sequence belongs to the class-I aminoacyl-tRNA synthetase family. Glutamate--tRNA ligase type 1 subfamily. In terms of assembly, monomer.

Its subcellular location is the cytoplasm. The enzyme catalyses tRNA(Glu) + L-glutamate + ATP = L-glutamyl-tRNA(Glu) + AMP + diphosphate. Catalyzes the attachment of glutamate to tRNA(Glu) in a two-step reaction: glutamate is first activated by ATP to form Glu-AMP and then transferred to the acceptor end of tRNA(Glu). This chain is Glutamate--tRNA ligase, found in Acholeplasma laidlawii (strain PG-8A).